The primary structure comprises 288 residues: Ion-translocating oxidoreductase complex subunit D (288 aa).

Helical transmembrane passes span 26–46 (IVAL…AALG), 47–67 (NIIA…KAFN), 80–100 (LGLL…IFIG), 101–121 (GAFA…YTFH), 126–146 (AWVF…IPIL), 159–179 (GFLT…LILV), 200–220 (VLGD…VFFI), 235–255 (IVYG…SGNY), and 256–276 (VWGT…IELK).

It belongs to the NqrB/RnfD family. In terms of assembly, the Rnf complex is probably composed of eight subunits, including RnfA, RnfB, RnfC, RnfD, RnfE and RnfG. The cofactor is FMN.

Its subcellular location is the cell membrane. Part of a membrane-bound complex that couples electron transfer with translocation of ions across the membrane. Catalyzes Na(+) transport, most probably coupled to electron transfer from reduced ferredoxin to methanophenazine and heterodisulfide reductase. Involved in heterodisulfide reduction during methanogenesis from acetate. This is Ion-translocating oxidoreductase complex subunit D from Methanosarcina acetivorans (strain ATCC 35395 / DSM 2834 / JCM 12185 / C2A).